A 242-amino-acid polypeptide reads, in one-letter code: MNKTALITGASGGIGKSISETLAARGYNLLLHYNTNQNAAAELAEKLSQMFGVNAEILQADLSAQDGADKLTSSIVQPIDAIVLNSGRSHFGLITDVDNATVQEMVQLHVASPYMLTRNLLPGMIRNKSGAIVAVSSIWGETGASCEVLYSMAKGAQHSFVKGLAKELAPSGIRVNAVAPGAVDTNMMNQFTPAEKEEIADEIPIGRLARPQEIADATAFLLSEKASYITGQILSVNGGWHC.

Position 8–15 (8–15 (TGASGGIG)) interacts with NADP(+). S137 is a binding site for substrate. Y150 serves as the catalytic Proton acceptor.

It belongs to the short-chain dehydrogenases/reductases (SDR) family.

This is an uncharacterized protein from Bacillus subtilis (strain 168).